A 304-amino-acid chain; its full sequence is Protoheme IX farnesyltransferase 1 (304 aa).

8 helical membrane passes run 24 to 44 (VVVLMLITSLIGMLLATKAPL), 47 to 67 (FVPWQVLIFGNLGIGLCAGAA), 99 to 119 (MALGFALLLALAGMAVLLAFT), 122 to 142 (LTAWLTLASLLGYAALYTGFL), 150 to 170 (IVIGGLAGAAPPLLGWVAITG), 176 to 196 (PLLLVLIIFAWTPPHFWALCI), 228 to 248 (LVLFAVSLMPFVIHMSGLVYL), and 280 to 300 (YSIVYLFLLFMALLVDHYLPL).

The protein belongs to the UbiA prenyltransferase family. Protoheme IX farnesyltransferase subfamily.

The protein localises to the cell inner membrane. The catalysed reaction is heme b + (2E,6E)-farnesyl diphosphate + H2O = Fe(II)-heme o + diphosphate. It participates in porphyrin-containing compound metabolism; heme O biosynthesis; heme O from protoheme: step 1/1. Converts heme B (protoheme IX) to heme O by substitution of the vinyl group on carbon 2 of heme B porphyrin ring with a hydroxyethyl farnesyl side group. The polypeptide is Protoheme IX farnesyltransferase 1 (Pseudomonas aeruginosa (strain UCBPP-PA14)).